The chain runs to 99 residues: Small ribosomal subunit protein uS14c (99 aa).

It belongs to the universal ribosomal protein uS14 family. Part of the 30S ribosomal subunit.

The protein localises to the plastid. The protein resides in the chloroplast. In terms of biological role, binds 16S rRNA, required for the assembly of 30S particles. This is Small ribosomal subunit protein uS14c from Welwitschia mirabilis (Tree tumbo).